Here is a 407-residue protein sequence, read N- to C-terminus: MMVMVELLSPANDLTCLKTAIDYGADAVYCGLKELNMRANAKNFTREELIEGIKYAHDNNKKVYLCTNTVVYENDLKKVEEILDFANSAEVDAVIVSDLGTMQLANELGLRVHASVQCNVTNSLTAKFYSKFAKRVILSRELTLNQIKEIRENLKKDKVDLELEGFVHGALCVAISGRCFLSSYLFGRHANCGDCLQPCRRKWKLINEHHDGTYEIVCEGKYLLSPKDLCMIEHIPELMEVFDSFKIEGRAKNADYVMRTTKIYREAIDSVLDGSYYDKLEYFKKELQKVYNRSYDTGFYFRDINKNHDFQYEIEGNASKYRKIEIGRVVNFYKKVSVAEIELWHDLKIGDTILIIGKTTGCVEEVVKSMQINHKDVEIAKKGERVGVKLNHLVREGDRVYLLKETI.

The protein belongs to the peptidase U32 family.

This is an uncharacterized protein from Methanocaldococcus jannaschii (strain ATCC 43067 / DSM 2661 / JAL-1 / JCM 10045 / NBRC 100440) (Methanococcus jannaschii).